Reading from the N-terminus, the 31-residue chain is Photosystem II reaction center protein T (31 aa).

The chain crosses the membrane as a helical span at residues A3–F23.

The protein belongs to the PsbT family. In terms of assembly, PSII is composed of 1 copy each of membrane proteins PsbA, PsbB, PsbC, PsbD, PsbE, PsbF, PsbH, PsbI, PsbJ, PsbK, PsbL, PsbM, PsbT, PsbY, PsbZ, Psb30/Ycf12, at least 3 peripheral proteins of the oxygen-evolving complex and a large number of cofactors. It forms dimeric complexes.

It is found in the plastid. It localises to the chloroplast thylakoid membrane. Functionally, found at the monomer-monomer interface of the photosystem II (PS II) dimer, plays a role in assembly and dimerization of PSII. PSII is a light-driven water plastoquinone oxidoreductase, using light energy to abstract electrons from H(2)O, generating a proton gradient subsequently used for ATP formation. The protein is Photosystem II reaction center protein T of Ostreococcus tauri.